We begin with the raw amino-acid sequence, 485 residues long: Glutamyl-tRNA(Gln) amidotransferase subunit A (485 aa).

Catalysis depends on charge relay system residues Lys78 and Ser153. Ser177 (acyl-ester intermediate) is an active-site residue.

It belongs to the amidase family. GatA subfamily. As to quaternary structure, heterotrimer of A, B and C subunits.

It carries out the reaction L-glutamyl-tRNA(Gln) + L-glutamine + ATP + H2O = L-glutaminyl-tRNA(Gln) + L-glutamate + ADP + phosphate + H(+). Its function is as follows. Allows the formation of correctly charged Gln-tRNA(Gln) through the transamidation of misacylated Glu-tRNA(Gln) in organisms which lack glutaminyl-tRNA synthetase. The reaction takes place in the presence of glutamine and ATP through an activated gamma-phospho-Glu-tRNA(Gln). This Bacillus cereus (strain ATCC 14579 / DSM 31 / CCUG 7414 / JCM 2152 / NBRC 15305 / NCIMB 9373 / NCTC 2599 / NRRL B-3711) protein is Glutamyl-tRNA(Gln) amidotransferase subunit A.